The following is a 561-amino-acid chain: Potassium-transporting ATPase potassium-binding subunit (561 aa).

10 helical membrane passes run 4–24, 65–85, 134–154, 177–197, 253–273, 285–305, 380–400, 417–437, 484–504, and 528–548; these read IIMQ…PLGI, AGSV…VLML, GLTV…FAVI, LYIL…QGVV, FTNL…VVMF, AIMT…TISE, GLYG…LLVG, MVCL…AFAV, MVGA…ALYL, and FIGL…LPAL.

It belongs to the KdpA family. In terms of assembly, the system is composed of three essential subunits: KdpA, KdpB and KdpC.

The protein localises to the cell membrane. In terms of biological role, part of the high-affinity ATP-driven potassium transport (or Kdp) system, which catalyzes the hydrolysis of ATP coupled with the electrogenic transport of potassium into the cytoplasm. This subunit binds the extracellular potassium ions and delivers the ions to the membrane domain of KdpB through an intramembrane tunnel. This is Potassium-transporting ATPase potassium-binding subunit from Listeria welshimeri serovar 6b (strain ATCC 35897 / DSM 20650 / CCUG 15529 / CIP 8149 / NCTC 11857 / SLCC 5334 / V8).